A 164-amino-acid polypeptide reads, in one-letter code: Ribosome-binding factor A (164 aa).

Residues 123-164 form a disordered region; that stretch reads ARDLGVPPSGEDDGDDEADDEDDDGGEEGPGAAAPPPADEGR. Acidic residues predominate over residues 132 to 149; sequence GEDDGDDEADDEDDDGGE. Residues 155-164 are compositionally biased toward pro residues; sequence AAPPPADEGR.

Belongs to the RbfA family. Monomer. Binds 30S ribosomal subunits, but not 50S ribosomal subunits or 70S ribosomes.

Its subcellular location is the cytoplasm. In terms of biological role, one of several proteins that assist in the late maturation steps of the functional core of the 30S ribosomal subunit. Associates with free 30S ribosomal subunits (but not with 30S subunits that are part of 70S ribosomes or polysomes). Required for efficient processing of 16S rRNA. May interact with the 5'-terminal helix region of 16S rRNA. In Rhodospirillum rubrum (strain ATCC 11170 / ATH 1.1.1 / DSM 467 / LMG 4362 / NCIMB 8255 / S1), this protein is Ribosome-binding factor A.